The chain runs to 77 residues: Teretoxin Tsu15.4 (77 aa).

The first 21 residues, 1 to 21 (MTKLTVLLLAILVLLPLATSN), serve as a signal peptide directing secretion. Positions 22-40 (SAADEALASLSGLLRRAKR) are excised as a propeptide.

In terms of processing, contains 4 disulfide bonds. As to expression, expressed by the venom duct.

It is found in the secreted. This chain is Teretoxin Tsu15.4, found in Terebra subulata (Chocolate spotted auger).